A 512-amino-acid chain; its full sequence is MTTSKDTTKVHKPWTEVVTEKRALRDARIDKHLKSDIKFPSDGISFETVDIDVLTSLLRDRKVSAVEVIHAHSRACEAQKQTNCLTEICFDDALEQATQLDEFQQEHGQLMGPLHGVPVTVKDQFNIRGLDSTLGYVAKAFSPAESDAPLVQTLKKLGAVIIAKTNLPQSIMWCETNNPLWGLTTHPEDPKLTPGGSSGGEAAMLLMGASIIGWGTDIGGSIRIPCHMNGLWGLKPSSGRLSYRGVEVTLEGQQHIPSAVGPMARSLSCLKLVTKLAIEAEPWAIDPQLPPVPWRDGIFQATSTRPLSVFRDLVTKLEAAGHEVIEWDSSLNSSIIDIMDGYYSADGGEDIRSAVSAGGEPFIPQIQAFVNRGEPISVFEYWQLNKRKIAIQEAYHDMWDNKRSPTSRPVDVLLVPTMPHTAVPHGSCRWTGYTKIFNLLDYTALTFPAGKAPRGENDGSFWEHVPRNEVDAWNQRLYDPVTMGGRHVGLQIVGRRFEEEKVPIVLKPKCIF.

Residues Lys122 and Ser197 each act as charge relay system in the active site. Substrate contacts are provided by residues Ser197 and 218 to 221 (IGGS). The active-site Acyl-ester intermediate is Ser221.

This sequence belongs to the amidase family.

It carries out the reaction a monocarboxylic acid amide + H2O = a monocarboxylate + NH4(+). It participates in xenobiotic degradation. Its function is as follows. Amidase; part of the Fusarium detoxification of benzoxazolinone cluster 2 (FDB2) involved in the degradation of benzoxazolinones produced by the host plant. Maize, wheat, and rye produce the 2 benzoxazinone phytoanticipins 2,4-dihy-droxy-7-methoxy-1,4-benzoxazin-3-one (DIMBOA) and 2,4-dihydroxy-1,4-benzoxazin-3-one (DIBOA) that, due to their inherent instability once released, spontaneously degrade to the more stable corresponding benzoxazolinones, 6-methoxy-2-benzoxazolinone (MBOA) and 2-benzoxazolinone (BOA), respectively. The first step in the detoxification of benzoxazolinones involves the hydrolysis of the cyclic ester bond of benzoxazolinones by the FDB1 cluster gamma-lactamase MBL1 to aminophenols. MBL1 is able to convert BOA into 2-aminophenol (2-AP), as well as MBOA into 5-methoxy-2-aminophenol (2-AMP). The FDB2 cluster N-malonyltransferase FDB2/NAT1 then metabolizes aminophenols via N-malonylation to non-toxic malonamic acids. FDB2/NAT1 converts 2-AP into N-(2-hydroxyphenyl) malonamic acid (HPMA) and 2-AMP into N-(2-hydroxy-4-methoxyphenyl) malonamic acid (HMPMA). The duplicated dienlactone hydrolases DLH1 and DLH2 may provide redundant function for hydrolyzing the lactone moiety in the BOA molecule. The roles of the amidases an other enzymes encoded by the 2 FDB clusters have not been identified so far. This is Amidase 2 from Gibberella moniliformis (strain M3125 / FGSC 7600) (Maize ear and stalk rot fungus).